A 264-amino-acid chain; its full sequence is 3-methyl-2-oxobutanoate hydroxymethyltransferase (264 aa).

Mg(2+)-binding residues include aspartate 45 and aspartate 84. Residues 45–46, aspartate 84, and lysine 112 each bind 3-methyl-2-oxobutanoate; that span reads DS. Glutamate 114 is a Mg(2+) binding site. The Proton acceptor role is filled by glutamate 181.

The protein belongs to the PanB family. As to quaternary structure, homodecamer; pentamer of dimers. It depends on Mg(2+) as a cofactor.

Its subcellular location is the cytoplasm. It catalyses the reaction 3-methyl-2-oxobutanoate + (6R)-5,10-methylene-5,6,7,8-tetrahydrofolate + H2O = 2-dehydropantoate + (6S)-5,6,7,8-tetrahydrofolate. It functions in the pathway cofactor biosynthesis; (R)-pantothenate biosynthesis; (R)-pantoate from 3-methyl-2-oxobutanoate: step 1/2. Its function is as follows. Catalyzes the reversible reaction in which hydroxymethyl group from 5,10-methylenetetrahydrofolate is transferred onto alpha-ketoisovalerate to form ketopantoate. This Escherichia coli (strain 55989 / EAEC) protein is 3-methyl-2-oxobutanoate hydroxymethyltransferase.